The chain runs to 670 residues: Cyclic di-GMP phosphodiesterase PdeA (670 aa).

In terms of domain architecture, EAL spans glutamine 428–isoleucine 670.

The enzyme catalyses 3',3'-c-di-GMP + H2O = 5'-phosphoguanylyl(3'-&gt;5')guanosine + H(+). Functionally, phosphodiesterase (PDE) that catalyzes the hydrolysis of cyclic diguanylate (c-di-GMP) to pGpG. The sequence is that of Cyclic di-GMP phosphodiesterase PdeA from Borreliella burgdorferi (strain ATCC 35210 / DSM 4680 / CIP 102532 / B31) (Borrelia burgdorferi).